We begin with the raw amino-acid sequence, 185 residues long: Ribosome-recycling factor (185 aa).

The protein belongs to the RRF family.

The protein localises to the cytoplasm. Responsible for the release of ribosomes from messenger RNA at the termination of protein biosynthesis. May increase the efficiency of translation by recycling ribosomes from one round of translation to another. This is Ribosome-recycling factor from Yersinia pseudotuberculosis serotype O:1b (strain IP 31758).